Reading from the N-terminus, the 156-residue chain is SsrA-binding protein (156 aa).

Belongs to the SmpB family.

Its subcellular location is the cytoplasm. In terms of biological role, required for rescue of stalled ribosomes mediated by trans-translation. Binds to transfer-messenger RNA (tmRNA), required for stable association of tmRNA with ribosomes. tmRNA and SmpB together mimic tRNA shape, replacing the anticodon stem-loop with SmpB. tmRNA is encoded by the ssrA gene; the 2 termini fold to resemble tRNA(Ala) and it encodes a 'tag peptide', a short internal open reading frame. During trans-translation Ala-aminoacylated tmRNA acts like a tRNA, entering the A-site of stalled ribosomes, displacing the stalled mRNA. The ribosome then switches to translate the ORF on the tmRNA; the nascent peptide is terminated with the 'tag peptide' encoded by the tmRNA and targeted for degradation. The ribosome is freed to recommence translation, which seems to be the essential function of trans-translation. This chain is SsrA-binding protein, found in Shouchella clausii (strain KSM-K16) (Alkalihalobacillus clausii).